A 211-amino-acid polypeptide reads, in one-letter code: Chaperone protein TorD (211 aa).

It belongs to the TorD/DmsD family. TorD subfamily.

It localises to the cytoplasm. Functionally, involved in the biogenesis of TorA. Acts on TorA before the insertion of the molybdenum cofactor and, as a result, probably favors a conformation of the apoenzyme that is competent for acquiring the cofactor. The polypeptide is Chaperone protein TorD (Shewanella loihica (strain ATCC BAA-1088 / PV-4)).